Consider the following 388-residue polypeptide: Spermidine/putrescine import ATP-binding protein PotA (388 aa).

One can recognise an ABC transporter domain in the interval 17–247; sequence IEIDHVTKRF…PATVFVANFI (231 aa). ATP is bound at residue 49-56; the sequence is GPSGCGKT.

The protein belongs to the ABC transporter superfamily. Spermidine/putrescine importer (TC 3.A.1.11.1) family. The complex is composed of two ATP-binding proteins (PotA), two transmembrane proteins (PotB and PotC) and a solute-binding protein (PotD).

The protein resides in the cell membrane. The enzyme catalyses ATP + H2O + polyamine-[polyamine-binding protein]Side 1 = ADP + phosphate + polyamineSide 2 + [polyamine-binding protein]Side 1.. Part of the ABC transporter complex PotABCD involved in spermidine/putrescine import. Responsible for energy coupling to the transport system. The sequence is that of Spermidine/putrescine import ATP-binding protein PotA from Mycobacterium sp. (strain KMS).